Reading from the N-terminus, the 433-residue chain is T-box transcription factor T (433 aa).

Positions 49 to 217 form a DNA-binding region, T-box; it reads LWLRFKELTN…YNPFAKAFLD (169 aa).

In terms of assembly, monomer. Binds DNA as a monomer.

Its subcellular location is the nucleus. Functionally, involved in the transcriptional regulation of genes required for mesoderm formation and differentiation. Binds to a palindromic site (called T site) and activates gene transcription when bound to such a site. In Gallus gallus (Chicken), this protein is T-box transcription factor T.